A 144-amino-acid polypeptide reads, in one-letter code: Large ribosomal subunit protein uL15 (144 aa).

Residues Met1–Gly53 are disordered. Residues Arg21–Ala31 are compositionally biased toward gly residues.

The protein belongs to the universal ribosomal protein uL15 family. In terms of assembly, part of the 50S ribosomal subunit.

Its function is as follows. Binds to the 23S rRNA. This Laribacter hongkongensis (strain HLHK9) protein is Large ribosomal subunit protein uL15.